Reading from the N-terminus, the 125-residue chain is Small ribosomal subunit protein uS12c (125 aa).

It belongs to the universal ribosomal protein uS12 family. In terms of assembly, part of the 30S ribosomal subunit.

The protein resides in the plastid. It is found in the chloroplast. With S4 and S5 plays an important role in translational accuracy. Located at the interface of the 30S and 50S subunits. The chain is Small ribosomal subunit protein uS12c (rps12) from Tupiella akineta (Green alga).